The following is a 314-amino-acid chain: Olfactory receptor 2W3 (314 aa).

Residues 1–25 (MDGTNGSTQTHFILLGFSDRPHLER) are Extracellular-facing. An N-linked (GlcNAc...) asparagine glycan is attached at Asn5. A helical membrane pass occupies residues 26 to 49 (ILFVVILIAYLLTLVGNTTIILVS). The Cytoplasmic portion of the chain corresponds to 50–57 (RLDPHLHT). Residues 58 to 79 (PMYFFLAHLSFLDLSFTTSSIP) form a helical membrane-spanning segment. The Extracellular portion of the chain corresponds to 80–100 (QLLYNLNGCDKTISYMGCAIQ). A helical membrane pass occupies residues 101 to 120 (LFLFLGLGGVECLLLAVMAY). Topologically, residues 121 to 139 (DRCVAICKPLHYMVIMNPR) are cytoplasmic. The chain crosses the membrane as a helical span at residues 140–158 (LCRGLVSVTWGCGVANSLA). At 159-195 (MSPVTLRLPRCGHHEVDHFLREMPALIRMACVSTVAI) the chain is on the extracellular side. Residues 196–219 (EGTVFVLAVGVVLSPLVFILLSYS) form a helical membrane-spanning segment. Topologically, residues 220 to 236 (YIVRAVLQIRSASGRQK) are cytoplasmic. A helical transmembrane segment spans residues 237-259 (AFGTCGSHLTVVSLFYGNIIYMY). At 260–272 (MQPGASSSQDQGM) the chain is on the extracellular side. Residues 273 to 292 (FLMLFYNIVTPLLNPLIYTL) traverse the membrane as a helical segment. Residues 293–314 (RNREVKGALGRLLLGKRELGKE) lie on the Cytoplasmic side of the membrane.

It belongs to the G-protein coupled receptor 1 family.

The protein resides in the cell membrane. Functionally, odorant receptor. The polypeptide is Olfactory receptor 2W3 (OR2W3) (Homo sapiens (Human)).